A 189-amino-acid chain; its full sequence is MGTPNDQAVLQAIFNPDTPFGDIVGLDLGEEAEKEEREEDEVFPQAQLEQSKALELQGVMAAEAGDLSTALERFGQAICLLPERASAYNNRAQARRLQGDVAGALEDLERAVELSGGRGRAARQSFVQRGLLARLQGRDDDARRDFERAARLGSPFARRQLVLLNPYAALCNRMLADMMGQLRRPRDSR.

TPR repeat units follow at residues 51 to 84 (SKAL…LPER), 86 to 118 (SAYN…SGGR), and 123 to 156 (RQSF…GSPF).

The protein belongs to the TTC36 family.

This is Tetratricopeptide repeat protein 36 (TTC36) from Homo sapiens (Human).